The chain runs to 146 residues: MKALIQRVSAASVRVDNQIVGQIEQGILAYIGLGPEDTLKSAQKMIDKILGYRIFDNDAGKLDKNVQQVAGGLLLVSQFTLMAKTDKGRRPDFGGAMPPAQASELFKQMIDYAKQQHDKVATGEFGANMLVQADNDGPLNFILEIS.

Positions 137-138 (GP) match the Gly-cisPro motif, important for rejection of L-amino acids motif.

It belongs to the DTD family. In terms of assembly, homodimer.

The protein resides in the cytoplasm. The enzyme catalyses glycyl-tRNA(Ala) + H2O = tRNA(Ala) + glycine + H(+). It catalyses the reaction a D-aminoacyl-tRNA + H2O = a tRNA + a D-alpha-amino acid + H(+). An aminoacyl-tRNA editing enzyme that deacylates mischarged D-aminoacyl-tRNAs. Also deacylates mischarged glycyl-tRNA(Ala), protecting cells against glycine mischarging by AlaRS. Acts via tRNA-based rather than protein-based catalysis; rejects L-amino acids rather than detecting D-amino acids in the active site. By recycling D-aminoacyl-tRNA to D-amino acids and free tRNA molecules, this enzyme counteracts the toxicity associated with the formation of D-aminoacyl-tRNA entities in vivo and helps enforce protein L-homochirality. The polypeptide is D-aminoacyl-tRNA deacylase (Psychrobacter sp. (strain PRwf-1)).